A 902-amino-acid chain; its full sequence is Translation initiation factor IF-2 (902 aa).

Basic and acidic residues predominate over residues 137-177 (NLDEQQRLAESDRARDEAIQRKRDEEQAAKDRVEAERKAAE). 2 disordered regions span residues 137–248 (NLDE…SHVM) and 266–314 (HLSA…ERPT). Composition is skewed to low complexity over residues 178–229 (EAAA…ATPA) and 279–291 (RGKP…SSSS). In terms of domain architecture, tr-type G spans 401-570 (SRPPVVTIMG…SLQAEVLELK (170 aa)). A G1 region spans residues 410–417 (GHVDHGKT). 410-417 (GHVDHGKT) contributes to the GTP binding site. Positions 435-439 (GITQH) are G2. A G3 region spans residues 456–459 (DTPG). GTP-binding positions include 456–460 (DTPGH) and 510–513 (NKID). Residues 510-513 (NKID) form a G4 region. The G5 stretch occupies residues 546-548 (SAK).

Belongs to the TRAFAC class translation factor GTPase superfamily. Classic translation factor GTPase family. IF-2 subfamily.

The protein localises to the cytoplasm. Functionally, one of the essential components for the initiation of protein synthesis. Protects formylmethionyl-tRNA from spontaneous hydrolysis and promotes its binding to the 30S ribosomal subunits. Also involved in the hydrolysis of GTP during the formation of the 70S ribosomal complex. This Xanthomonas campestris pv. campestris (strain 8004) protein is Translation initiation factor IF-2.